Reading from the N-terminus, the 302-residue chain is Protoheme IX farnesyltransferase (302 aa).

The next 9 helical transmembrane spans lie at 27–47, 48–68, 97–117, 119–139, 148–168, 176–196, 219–239, 240–260, and 280–300; these read VLTL…QSIH, PVLG…AGAL, SALH…GLAL, VLAA…YTIW, IVIG…AATG, LLFA…ALFI, IQIM…WAMG, LTGA…LLLA, and LFGF…ADKV.

It belongs to the UbiA prenyltransferase family. Protoheme IX farnesyltransferase subfamily.

Its subcellular location is the cell inner membrane. The enzyme catalyses heme b + (2E,6E)-farnesyl diphosphate + H2O = Fe(II)-heme o + diphosphate. The protein operates within porphyrin-containing compound metabolism; heme O biosynthesis; heme O from protoheme: step 1/1. Its function is as follows. Converts heme B (protoheme IX) to heme O by substitution of the vinyl group on carbon 2 of heme B porphyrin ring with a hydroxyethyl farnesyl side group. This is Protoheme IX farnesyltransferase from Rhizorhabdus wittichii (strain DSM 6014 / CCUG 31198 / JCM 15750 / NBRC 105917 / EY 4224 / RW1) (Sphingomonas wittichii).